The primary structure comprises 173 residues: Ribosome maturation factor RimM (173 aa).

The 74-residue stretch at 96–169 (PDEYYDHQLE…LVEIDPPEGL (74 aa)) folds into the PRC barrel domain.

It belongs to the RimM family. As to quaternary structure, binds ribosomal protein uS19.

It localises to the cytoplasm. An accessory protein needed during the final step in the assembly of 30S ribosomal subunit, possibly for assembly of the head region. Essential for efficient processing of 16S rRNA. May be needed both before and after RbfA during the maturation of 16S rRNA. It has affinity for free ribosomal 30S subunits but not for 70S ribosomes. The polypeptide is Ribosome maturation factor RimM (Mycobacterium sp. (strain JLS)).